Reading from the N-terminus, the 215-residue chain is MVLLTMIARVADGLPLAASMQEDEQSGRDLQQYQNQAKQLFRKLNEQSPTRCTLEAGAMTFHYLIEKGVCYLVLCEAAFPKKLAFAYLEDLFSEFDEQHGKKVPTVSRPYSFIEFDNYIQKTKKSYIDSRARRNLSSVNTELQDVQRIMVANIEEVLLRGEALSALDSKASNLSTLSKKYRQDAKYLNMRSTYAKLAAVAVFSVMLIVYIRFWWL.

Over 1–190 (MVLLTMIARV…RQDAKYLNMR (190 aa)) the chain is Cytoplasmic. Residues 6–119 (MIARVADGLP…YSFIEFDNYI (114 aa)) enclose the Longin domain. In terms of domain architecture, v-SNARE coiled-coil homology spans 134–194 (NLSSVNTELQ…KYLNMRSTYA (61 aa)). The chain crosses the membrane as a helical span at residues 191–213 (STYAKLAAVAVFSVMLIVYIRFW). Residues 214 to 215 (WL) are Lumenal-facing.

Belongs to the synaptobrevin family. Component of 2 distinct SNARE complexes.

The protein localises to the endoplasmic reticulum membrane. It localises to the endoplasmic reticulum-Golgi intermediate compartment membrane. It is found in the golgi apparatus. Its subcellular location is the cis-Golgi network membrane. The protein resides in the trans-Golgi network membrane. The protein localises to the melanosome. Its function is as follows. SNARE involved in targeting and fusion of ER-derived transport vesicles with the Golgi complex as well as Golgi-derived retrograde transport vesicles with the ER. This chain is Vesicle-trafficking protein SEC22b, found in Xenopus tropicalis (Western clawed frog).